Consider the following 495-residue polypeptide: Acyltransferase abl6 (495 aa).

The active-site Proton acceptor is histidine 171.

The protein belongs to the plant acyltransferase family.

Its function is as follows. Acyltransferase; part of the gene cluster that mediates the biosynthesis of abscisic acid (ABA), a phytohormone that acts antagonistically toward salicylic acid (SA), jasmonic acid (JA) and ethylene (ETH) signaling, to impede plant defense responses. The first step of the pathway catalyzes the reaction from farnesyl diphosphate to alpha-ionylideneethane performed by the alpha-ionylideneethane synthase abl3 via a three-step reaction mechanism involving 2 neutral intermediates, beta-farnesene and allofarnesene. The cytochrome P450 monooxygenase abl1 might then be involved in the conversion of alpha-ionylideneethane to alpha-ionylideneacetic acid. Alpha-ionylideneacetic acid is further converted to abscisic acid in 2 steps involving the cytochrome P450 monooxygenase abl2 and the short-chain dehydrogenase/reductase abl4, via the intermediates 1'-deoxy-ABA or 1',4'-trans-diol-ABA, depending on the order of action of these 2 enzymes. Abl2 is responsible for the hydroxylation of carbon atom C-1' and abl4 might be involved in the oxidation of the C-4' carbon atom. The acyltransferase abl6 seems not essential for the biosynthesis of ABA, but it may acetylate ABA as part of the synthesis of another ABA-related molecule. In Leptosphaeria maculans (strain JN3 / isolate v23.1.3 / race Av1-4-5-6-7-8) (Blackleg fungus), this protein is Acyltransferase abl6.